A 219-amino-acid chain; its full sequence is Elongation factor Ts (219 aa).

Residues 82 to 85 (TDFV) are involved in Mg(2+) ion dislocation from EF-Tu.

Belongs to the EF-Ts family.

It localises to the cytoplasm. Its function is as follows. Associates with the EF-Tu.GDP complex and induces the exchange of GDP to GTP. It remains bound to the aminoacyl-tRNA.EF-Tu.GTP complex up to the GTP hydrolysis stage on the ribosome. The polypeptide is Elongation factor Ts (Gloeobacter violaceus (strain ATCC 29082 / PCC 7421)).